The following is a 277-amino-acid chain: Putative thiosulfate sulfurtransferase (277 aa).

Rhodanese domains are found at residues 18–125 (DSAN…PLST) and 154–274 (SIKI…VPIE). The Cysteine persulfide intermediate role is filled by Cys-233. Residue Arg-238 coordinates substrate.

It catalyses the reaction thiosulfate + hydrogen cyanide = thiocyanate + sulfite + 2 H(+). May be a sulfotransferase involved in the formation of thiosulfate. This Mycobacterium leprae (strain TN) protein is Putative thiosulfate sulfurtransferase (cysA).